The sequence spans 176 residues: Large ribosomal subunit protein eL20 (176 aa).

Residue lysine 11 forms a Glycyl lysine isopeptide (Lys-Gly) (interchain with G-Cter in SUMO2) linkage. A Phosphotyrosine modification is found at tyrosine 63. Serine 71 carries the phosphoserine modification. Lysine 76 carries the N6-succinyllysine modification. A Phosphoserine modification is found at serine 123. Residues lysine 128 and lysine 170 each participate in a glycyl lysine isopeptide (Lys-Gly) (interchain with G-Cter in SUMO2) cross-link.

It belongs to the eukaryotic ribosomal protein eL20 family. As to quaternary structure, component of the large ribosomal subunit. Binds IPO9 with high affinity.

Its subcellular location is the cytoplasm. In terms of biological role, component of the large ribosomal subunit. The ribosome is a large ribonucleoprotein complex responsible for the synthesis of proteins in the cell. The sequence is that of Large ribosomal subunit protein eL20 (RPL18A) from Bos taurus (Bovine).